Consider the following 180-residue polypeptide: Cell division protein SepF (180 aa).

The segment at 1–66 (MAFSFKSFFG…NRNGFAYDNG (66 aa)) is disordered. Residues 12–23 (ADDEEEEYEDSG) show a composition bias toward acidic residues. Residues 24–57 (YEQQPNQGQQQPVNSQQQNTSNQSYSGYNNQNQN) show a composition bias toward low complexity.

This sequence belongs to the SepF family. Homodimer. Interacts with FtsZ.

Its subcellular location is the cytoplasm. Cell division protein that is part of the divisome complex and is recruited early to the Z-ring. Probably stimulates Z-ring formation, perhaps through the cross-linking of FtsZ protofilaments. Its function overlaps with FtsA. The protein is Cell division protein SepF of Oenococcus oeni (strain ATCC BAA-331 / PSU-1).